A 504-amino-acid chain; its full sequence is Nuclear hormone receptor family member nhr-80 (504 aa).

The segment at residues S27–P103 is a DNA-binding region (nuclear receptor). 2 NR C4-type zinc fingers span residues C30–C50 and C66–C86. Residues S177–T192 are compositionally biased toward low complexity. The disordered stretch occupies residues S177–A199. Residues E214–D466 enclose the NR LBD domain. Residues L455 to D466 are AF-2.

This sequence belongs to the nuclear hormone receptor family. As to quaternary structure, interacts with nuclear hormone receptor nhr-49; the interaction is direct. As to expression, expressed in the intestine and in some head and tail neurons, as well as the ventral nerve cord.

The protein resides in the nucleus. In terms of biological role, transcription factor. Binds to regulatory elements and regulates transcription of target genes, including acyltransferase dgat-2. As part of a lysosome-to-nucleus retrograde lipid signaling pathway, acts as a direct nuclear receptor of oleoylethanolamide (OEA) and, acting in concert with nuclear hormone receptor nhr-49, activates the transcription of genes promoting longevity and mitochondrial beta-oxidation. Required to modulate expression of delta-9 fatty acid desaturases, thereby regulating lipid metabolism; in some contexts, acting in concert with nhr-49. Involved in modulation of lipid metabolism in response to the citrate-induced mitochondrial unfolded protein response (mtUPR), acting downstream of transcription factor dve-1 and ubiquitin-like protein 5. Plays a role in modulating mitochondrial morphology and function. Involved in positively modulating life-span in a germline-dependent manner, acting in concert with nuclear hormone receptor daf-12. Plays a role in transgenerational lipid accumulation in response to a high-fat diet. The chain is Nuclear hormone receptor family member nhr-80 from Caenorhabditis elegans.